The chain runs to 200 residues: Recombination protein RecR (200 aa).

The C4-type zinc-finger motif lies at 58–75; sequence CPLCFTLKESKEADCHFC. The region spanning 82-177 is the Toprim domain; sequence QSLCIVASPK…NISRLALGLP (96 aa).

Belongs to the RecR family.

Its function is as follows. May play a role in DNA repair. It seems to be involved in an RecBC-independent recombinational process of DNA repair. It may act with RecF and RecO. This chain is Recombination protein RecR, found in Chlamydia pneumoniae (Chlamydophila pneumoniae).